The sequence spans 362 residues: Histidinol-phosphate aminotransferase (362 aa).

K218 carries the post-translational modification N6-(pyridoxal phosphate)lysine.

It belongs to the class-II pyridoxal-phosphate-dependent aminotransferase family. Histidinol-phosphate aminotransferase subfamily. As to quaternary structure, homodimer. Pyridoxal 5'-phosphate is required as a cofactor.

The enzyme catalyses L-histidinol phosphate + 2-oxoglutarate = 3-(imidazol-4-yl)-2-oxopropyl phosphate + L-glutamate. Its pathway is amino-acid biosynthesis; L-histidine biosynthesis; L-histidine from 5-phospho-alpha-D-ribose 1-diphosphate: step 7/9. The protein is Histidinol-phosphate aminotransferase of Xanthomonas campestris pv. campestris (strain ATCC 33913 / DSM 3586 / NCPPB 528 / LMG 568 / P 25).